The primary structure comprises 363 residues: Forkhead box protein I1 (363 aa).

A compositionally biased stretch (low complexity) spans 1-18 (MNPVQQPAQQRSPASSLP). Disordered regions lie at residues 1-24 (MNPV…KRAQ), 210-269 (DNGN…SPPA), and 344-363 (TTAQ…QGRY). The segment at residues 125–219 (RPPYSYSALI…DNGNFRRKRK (95 aa)) is a DNA-binding region (fork-head). Over residues 231-243 (KIGEDHLNPKGKE) the composition is skewed to basic and acidic residues. Composition is skewed to low complexity over residues 244-258 (SPPM…EPSP) and 347-363 (QKQP…QGRY).

The protein localises to the nucleus. Its function is as follows. Transcription factor. Essential for ventral specification of the early cephalic (head) ectoderm during gastrulation, playing a role in the 'non-neural' versus 'neural' cell fate choice. Binds to DNA via the target sequence 5'-[AG]TAAA[CT]A-3', with 5'-ATAAACA-3' being the preferred binding site. The polypeptide is Forkhead box protein I1 (Xenopus tropicalis (Western clawed frog)).